Here is a 180-residue protein sequence, read N- to C-terminus: MQEKAVVLDDQMIRRALTRISHEIVERNKGVDNCVLVGIKTRGIFIAQRLAERIGQIEGKEMEVGELDITLYRDDLTLQSKNKEPLVKGSDIPVDITKKKVILVDDVLYTGRTVRAAMDALMDLGRPSQIQLAVLVDRGHRELPIRADYVGKNIPTSSEERIEVDLQETDQQDRVSIYDK.

The PRPP-binding motif lies at 101 to 113 (VILVDDVLYTGRT).

This sequence belongs to the purine/pyrimidine phosphoribosyltransferase family. PyrR subfamily. In terms of assembly, homodimer and homohexamer; in equilibrium.

The enzyme catalyses UMP + diphosphate = 5-phospho-alpha-D-ribose 1-diphosphate + uracil. Functionally, regulates transcriptional attenuation of the pyrimidine nucleotide (pyr) operon by binding in a uridine-dependent manner to specific sites on pyr mRNA. This disrupts an antiterminator hairpin in the RNA and favors formation of a downstream transcription terminator, leading to a reduced expression of downstream genes. Its function is as follows. Also displays a weak uracil phosphoribosyltransferase activity which is not physiologically significant. In Bacillus cereus (strain ATCC 14579 / DSM 31 / CCUG 7414 / JCM 2152 / NBRC 15305 / NCIMB 9373 / NCTC 2599 / NRRL B-3711), this protein is Bifunctional protein PyrR.